The following is a 555-amino-acid chain: Urocanate hydratase (555 aa).

NAD(+) is bound by residues 52-53 (GG), Gln130, 176-178 (GMG), Glu196, Arg201, 242-243 (NA), 263-267 (QTSAH), 273-274 (YL), and Tyr322. Cys410 is an active-site residue. Gly492 is an NAD(+) binding site.

This sequence belongs to the urocanase family. It depends on NAD(+) as a cofactor.

It localises to the cytoplasm. It catalyses the reaction 4-imidazolone-5-propanoate = trans-urocanate + H2O. It functions in the pathway amino-acid degradation; L-histidine degradation into L-glutamate; N-formimidoyl-L-glutamate from L-histidine: step 2/3. Its function is as follows. Catalyzes the conversion of urocanate to 4-imidazolone-5-propionate. This is Urocanate hydratase from Shewanella putrefaciens (strain CN-32 / ATCC BAA-453).